Here is a 319-residue protein sequence, read N- to C-terminus: Acetyl-coenzyme A carboxylase carboxyl transferase subunit alpha (319 aa).

The CoA carboxyltransferase C-terminal domain maps to 35-296 (DLDKEIKQLE…KQRLIEQLNE (262 aa)).

The protein belongs to the AccA family. Acetyl-CoA carboxylase is a heterohexamer composed of biotin carboxyl carrier protein (AccB), biotin carboxylase (AccC) and two subunits each of ACCase subunit alpha (AccA) and ACCase subunit beta (AccD).

The protein localises to the cytoplasm. The enzyme catalyses N(6)-carboxybiotinyl-L-lysyl-[protein] + acetyl-CoA = N(6)-biotinyl-L-lysyl-[protein] + malonyl-CoA. It participates in lipid metabolism; malonyl-CoA biosynthesis; malonyl-CoA from acetyl-CoA: step 1/1. Functionally, component of the acetyl coenzyme A carboxylase (ACC) complex. First, biotin carboxylase catalyzes the carboxylation of biotin on its carrier protein (BCCP) and then the CO(2) group is transferred by the carboxyltransferase to acetyl-CoA to form malonyl-CoA. The chain is Acetyl-coenzyme A carboxylase carboxyl transferase subunit alpha from Aliivibrio salmonicida (strain LFI1238) (Vibrio salmonicida (strain LFI1238)).